Consider the following 197-residue polypeptide: Large ribosomal subunit protein bL9c (197 aa).

The N-terminal 42 residues, Met-1 to Ser-42, are a transit peptide targeting the chloroplast.

Belongs to the bacterial ribosomal protein bL9 family. Part of the 50S ribosomal subunit.

It is found in the plastid. It localises to the chloroplast. Its function is as follows. Binds to the 23S rRNA. This Arabidopsis thaliana (Mouse-ear cress) protein is Large ribosomal subunit protein bL9c (RPL9).